Here is a 153-residue protein sequence, read N- to C-terminus: UPF0260 protein YcgN (153 aa).

This sequence belongs to the UPF0260 family.

The sequence is that of UPF0260 protein YcgN from Salmonella typhi.